A 475-amino-acid chain; its full sequence is METKLSLKKRLQQFSKKQLIALIILGAADVFVIAAPYYIKNVVPNLHLYLGITEDEVATLTSIIGYVTLATQLPGGFLANRFSSRKLLFLSEISTGVITFWLATNILTRESQKSNALFVQYCVIWGLWGITSTLIFWTPLWKLASQQATQENQALGFGIQGAANGVWGFIFIFLIALIITAVAYPAGGESSANNPAPFAIYAFIIGGMLLVTGFTVLFFVPEKPIEKYDSHTSLKTAKKNFEQILITLKNWKLWLLSFFLMGMYVFQSTFAYYLLQMMQNAFLAPVILGTVLGGVRTYVLRSAVSVYLGRLADKFRSYILFLMLCTGLGIIFVLMFILLGFGQVGQQQNYALIIVSAILYILTGVLSWGMVTVRYNQVAEIEIGKNNYASSVGLLSFIGFSTDGWLYTVTSVVGKAYTPDGQKNTSIQGYQIIAAICLGIALFGLLCGTIVFLVNTWELKRLGKTDYRWRTLDNA.

It to E.coli YihN.

This is an uncharacterized protein from Mycoplasma pneumoniae (strain ATCC 29342 / M129 / Subtype 1) (Mycoplasmoides pneumoniae).